The sequence spans 143 residues: Anti-sigma F factor (143 aa).

This sequence belongs to the anti-sigma-factor family.

It catalyses the reaction L-seryl-[protein] + ATP = O-phospho-L-seryl-[protein] + ADP + H(+). The catalysed reaction is L-threonyl-[protein] + ATP = O-phospho-L-threonyl-[protein] + ADP + H(+). In terms of biological role, binds to sigma F and blocks its ability to form an RNA polymerase holoenzyme (E-sigma F). Phosphorylates SpoIIAA on a serine residue. This phosphorylation may enable SpoIIAA to act as an anti-anti-sigma factor that counteracts SpoIIAB and thus releases sigma F from inhibition. This is Anti-sigma F factor from Clostridium novyi (strain NT).